Consider the following 344-residue polypeptide: Protein BIM1 (344 aa).

Serine 2 carries the post-translational modification N-acetylserine. In terms of domain architecture, Calponin-homology (CH) spans 6 to 107 (GESRTELLTW…FLQWLKKHWI (102 aa)). The interval 126-173 (IITNNSATKPRTVSNPTTAKRSSSTGTGSAMSGGLATRHSSLGINGSR) is disordered. Residues 127–146 (ITNNSATKPRTVSNPTTAKR) are compositionally biased toward polar residues. Residues 147–159 (SSSTGTGSAMSGG) show a composition bias toward low complexity. Serine 157 carries the phosphoserine modification. The span at 163 to 173 (RHSSLGINGSR) shows a compositional bias: polar residues. The 94-residue stretch at 188–281 (ELTKSQETIG…LYATAEGFEM (94 aa)) folds into the EB1 C-terminal domain. Residues 292-312 (NLGEHGTVPNQGGYANSNGEV) are disordered.

This sequence belongs to the MAPRE family.

The protein resides in the cytoplasm. Its subcellular location is the cytoskeleton. In terms of biological role, binds microtubules. The polypeptide is Protein BIM1 (BIM1) (Saccharomyces cerevisiae (strain ATCC 204508 / S288c) (Baker's yeast)).